The chain runs to 235 residues: Transmembrane protein 215 (235 aa).

The next 2 membrane-spanning stretches (helical) occupy residues 12–32 (LVVA…VSGM) and 40–60 (IPLL…IALA). The disordered stretch occupies residues 99–146 (SDLESGKGSSDELAKKAGLRGKQLPQGPGEVPMASSVTTPTPTEEGEC).

Its subcellular location is the membrane. This chain is Transmembrane protein 215 (Tmem215), found in Mus musculus (Mouse).